The primary structure comprises 369 residues: 4-hydroxy-3-methylbut-2-en-1-yl diphosphate synthase (flavodoxin) (369 aa).

Cys270, Cys273, Cys305, and Glu312 together coordinate [4Fe-4S] cluster.

The protein belongs to the IspG family. Requires [4Fe-4S] cluster as cofactor.

It carries out the reaction (2E)-4-hydroxy-3-methylbut-2-enyl diphosphate + oxidized [flavodoxin] + H2O + 2 H(+) = 2-C-methyl-D-erythritol 2,4-cyclic diphosphate + reduced [flavodoxin]. Its pathway is isoprenoid biosynthesis; isopentenyl diphosphate biosynthesis via DXP pathway; isopentenyl diphosphate from 1-deoxy-D-xylulose 5-phosphate: step 5/6. Its function is as follows. Converts 2C-methyl-D-erythritol 2,4-cyclodiphosphate (ME-2,4cPP) into 1-hydroxy-2-methyl-2-(E)-butenyl 4-diphosphate. The chain is 4-hydroxy-3-methylbut-2-en-1-yl diphosphate synthase (flavodoxin) from Psychromonas ingrahamii (strain DSM 17664 / CCUG 51855 / 37).